Here is a 353-residue protein sequence, read N- to C-terminus: MVDTHKLADDVLQLLDNRIEDNYRVCVILVGSPGSGKSTIAEELCQIINEKYHTFLSEHPNVIEVNDRLKPMVNLVDSLKTLQPNEVAEMIENQGLFKDHVEDVNFQPIKYSALTSNNEECTAVVARGGTANAIRIATVDNPVNVNKLAQDSINIAQIVPMDGFHLSRRCLDLFKDPQTAHKRRGSPSTFDSNNFLQLCKILAKTSLCKVSSHHKFYSTSSVFEKLSKTFSQKIPDIFVPGFNHALKDPTPDQYCISKFTRIVILEGLYLLYDQENWKKIYKTLADTGALLVYKIDIDYEATEERVAKRHLQSGLVTTIAEGREKFRSNDLLNGRDIDNHLIKVDNIVHIRND.

31–39 (GSPGSGKST) lines the ATP pocket.

Belongs to the YFH7 family.

Its function is as follows. ATP-dependent kinase that could be involved in endoplasmic reticulum membrane assembly. This is ATP-dependent kinase YFH7 (YFH7) from Saccharomyces cerevisiae (strain JAY291) (Baker's yeast).